The primary structure comprises 100 residues: MELSPREKDKLLIFTAALLAERRKARGLKLNYPEAVAFITAAIMEGARDGKTVAELMGYGATLLTRDDVMEGVPEMIPEIQVEATFPDGTKLVTVHQPIP.

The protein belongs to the urease gamma subunit family. As to quaternary structure, heterotrimer of UreA (gamma), UreB (beta) and UreC (alpha) subunits. Three heterotrimers associate to form the active enzyme.

The protein localises to the cytoplasm. It carries out the reaction urea + 2 H2O + H(+) = hydrogencarbonate + 2 NH4(+). The protein operates within nitrogen metabolism; urea degradation; CO(2) and NH(3) from urea (urease route): step 1/1. The sequence is that of Urease subunit gamma from Methylobacillus flagellatus (strain ATCC 51484 / DSM 6875 / VKM B-1610 / KT).